Here is a 559-residue protein sequence, read N- to C-terminus: MAQLPRLSRLGAPSLWDPASPAPTSGPRPRLWEGQDVLARWTDGLLYLGTIKKVDSAREVCLVQFEDDSQFLVLWKDISPAALPGEELLCCVCRSETVVPGNRLVSCEKCRHAYHQDCHVPRAPAPGEGEGASWVCRQCVFAIATKRGGALKKGPYARAMLGMKLSLPYGLKGLDWDAGHLSNRQQSYCYCGGPGEWNLKMLQCRSCLQWFHEACTQCLSKPLLYGDRFYEFECCVCRGGPEKVRRLQLRWVDVAHLVLYHLSVCCKKKYFDFDREILPFTSENWDSLLLGELSDTPKGERSSQLLSALNSHKDRFISGREIKKRKCLFGLHARTPPPVELLTGDGAPTSFPSGQGPGGGVSRPLGKRWRSEPEPLRRRQKGKVEELGPPTAAHSRHGSREQRALQASVSPPPPSPNQSYEGSSGYNFRPTDARCLPSSPIRMFASFHPSASTAGTSGDSEPPDRSPLGLHIGFPTDTPKSSPHSVTASSSSVPALTPGFSRHSPPSPLCRSLSPGTGGGVRGGVSYLSRGDPVRVLARRVRPDGSVQYLVEWGGGGIF.

In terms of domain architecture, Tudor spans proline 29–glutamate 86. PHD-type zinc fingers lie at residues glutamate 87–alanine 142 and glutamine 186–glycine 240. Disordered regions lie at residues proline 338–arginine 434 and histidine 448–serine 526. A compositionally biased stretch (basic and acidic residues) spans tryptophan 369–glutamate 386. Composition is skewed to polar residues over residues asparagine 417 to tyrosine 426 and proline 449 to aspartate 459. The segment covering serine 481–proline 515 has biased composition (low complexity).

It belongs to the Polycomblike family. Associated component of the PRC2 complex. Interacts with p53/TP53. Interacts with CHMP1. As to expression, testis-specific.

It is found in the nucleus. Its subcellular location is the cytoplasm. The protein resides in the cytoskeleton. The protein localises to the microtubule organizing center. It localises to the centrosome. In terms of biological role, polycomb group (PcG) that specifically binds histone H3 trimethylated at 'Lys-36' (H3K36me3) and recruits the PRC2 complex. Involved in DNA damage response and is recruited at double-strand breaks (DSBs). Acts by binding to H3K36me3, a mark for transcriptional activation, and recruiting the PRC2 complex: it is however unclear whether recruitment of the PRC2 complex to H3K36me3 leads to enhance or inhibit H3K27me3 methylation mediated by the PRC2 complex. According to some reports, PRC2 recruitment by PHF1 promotes H3K27me3 and subsequent gene silencing by inducing spreading of PRC2 and H3K27me3 into H3K36me3 loci. According to other reports, PHF1 recruits the PRC2 complex at double-strand breaks (DSBs) and inhibits the activity of PRC2. Regulates p53/TP53 stability and prolonges its turnover: may act by specifically binding to a methylated from of p53/TP53. This chain is PHD finger protein 1 (Phf1), found in Mus musculus (Mouse).